The following is a 178-amino-acid chain: Acireductone dioxygenase (178 aa).

Residues His-82, His-84, Glu-88, and His-127 each coordinate Fe(2+). Ni(2+) is bound by residues His-82, His-84, Glu-88, and His-127. A Phosphoserine modification is found at Ser-157.

Belongs to the acireductone dioxygenase (ARD) family. The cofactor is Fe(2+). It depends on Ni(2+) as a cofactor.

It localises to the cytoplasm. It is found in the nucleus. The enzyme catalyses 1,2-dihydroxy-5-(methylsulfanyl)pent-1-en-3-one + O2 = 4-methylsulfanyl-2-oxobutanoate + formate + 2 H(+). It catalyses the reaction 1,2-dihydroxy-5-(methylsulfanyl)pent-1-en-3-one + O2 = 3-(methylsulfanyl)propanoate + CO + formate + 2 H(+). It functions in the pathway amino-acid biosynthesis; L-methionine biosynthesis via salvage pathway; L-methionine from S-methyl-5-thio-alpha-D-ribose 1-phosphate: step 5/6. Catalyzes 2 different reactions between oxygen and the acireductone 1,2-dihydroxy-3-keto-5-methylthiopentene (DHK-MTPene) depending upon the metal bound in the active site. Fe-containing acireductone dioxygenase (Fe-ARD) produces formate and 2-keto-4-methylthiobutyrate (KMTB), the alpha-ketoacid precursor of methionine in the methionine recycle pathway. Ni-containing acireductone dioxygenase (Ni-ARD) produces methylthiopropionate, carbon monoxide and formate, and does not lie on the methionine recycle pathway. The sequence is that of Acireductone dioxygenase (adi1) from Schizosaccharomyces pombe (strain 972 / ATCC 24843) (Fission yeast).